The sequence spans 133 residues: Large ribosomal subunit protein uL22 (133 aa).

It belongs to the universal ribosomal protein uL22 family. Part of the 50S ribosomal subunit.

In terms of biological role, this protein binds specifically to 23S rRNA; its binding is stimulated by other ribosomal proteins, e.g. L4, L17, and L20. It is important during the early stages of 50S assembly. It makes multiple contacts with different domains of the 23S rRNA in the assembled 50S subunit and ribosome. Its function is as follows. The globular domain of the protein is located near the polypeptide exit tunnel on the outside of the subunit, while an extended beta-hairpin is found that lines the wall of the exit tunnel in the center of the 70S ribosome. This chain is Large ribosomal subunit protein uL22, found in Borrelia garinii subsp. bavariensis (strain ATCC BAA-2496 / DSM 23469 / PBi) (Borreliella bavariensis).